The sequence spans 65 residues: Large ribosomal subunit protein bL35 (65 aa).

It belongs to the bacterial ribosomal protein bL35 family.

This is Large ribosomal subunit protein bL35 from Thermotoga maritima (strain ATCC 43589 / DSM 3109 / JCM 10099 / NBRC 100826 / MSB8).